Consider the following 248-residue polypeptide: Ureidoacrylate amidohydrolase RutB (248 aa).

The active-site Proton acceptor is the Asp41. Residue Lys150 is part of the active site. Cys183 (nucleophile) is an active-site residue.

It belongs to the isochorismatase family. RutB subfamily.

It carries out the reaction (Z)-3-ureidoacrylate + H2O + H(+) = (Z)-3-aminoacrylate + NH4(+) + CO2. It catalyses the reaction (Z)-3-ureidoacrylate + H2O = (Z)-3-aminoacrylate + carbamate + H(+). The catalysed reaction is (Z)-2-methylureidoacrylate + H2O + H(+) = (Z)-2-methylaminoacrylate + NH4(+) + CO2. Functionally, hydrolyzes ureidoacrylate to form aminoacrylate and carbamate. The carbamate hydrolyzes spontaneously, thereby releasing one of the nitrogen atoms of the pyrimidine ring as ammonia and one of its carbon atoms as CO2. This chain is Ureidoacrylate amidohydrolase RutB, found in Methylorubrum extorquens (strain DSM 6343 / CIP 106787 / DM4) (Methylobacterium extorquens).